Consider the following 230-residue polypeptide: Cytochrome c oxidase subunit 2 (230 aa).

The Mitochondrial intermembrane segment spans residues 1-14; that stretch reads MAHPSQLGFQDAAS. Residues 15-45 traverse the membrane as a helical segment; sequence PVMEELLHFHDHTLMIVFLISTLVLYIIMAM. Residues 46-59 lie on the Mitochondrial matrix side of the membrane; the sequence is VSTKLTNKYILDSQ. The chain crosses the membrane as a helical span at residues 60–87; that stretch reads EIEIVWTILPAVILIMIALPSLRILYLM. At 88–230 the chain is on the mitochondrial intermembrane side; sequence DEINDPHLTI…SWSSLMLEEA (143 aa). 6 residues coordinate Cu cation: H161, C196, E198, C200, H204, and M207. E198 lines the Mg(2+) pocket.

This sequence belongs to the cytochrome c oxidase subunit 2 family. In terms of assembly, component of the cytochrome c oxidase (complex IV, CIV), a multisubunit enzyme composed of 14 subunits. The complex is composed of a catalytic core of 3 subunits MT-CO1, MT-CO2 and MT-CO3, encoded in the mitochondrial DNA, and 11 supernumerary subunits COX4I, COX5A, COX5B, COX6A, COX6B, COX6C, COX7A, COX7B, COX7C, COX8 and NDUFA4, which are encoded in the nuclear genome. The complex exists as a monomer or a dimer and forms supercomplexes (SCs) in the inner mitochondrial membrane with NADH-ubiquinone oxidoreductase (complex I, CI) and ubiquinol-cytochrome c oxidoreductase (cytochrome b-c1 complex, complex III, CIII), resulting in different assemblies (supercomplex SCI(1)III(2)IV(1) and megacomplex MCI(2)III(2)IV(2)). Found in a complex with TMEM177, COA6, COX18, COX20, SCO1 and SCO2. Interacts with TMEM177 in a COX20-dependent manner. Interacts with COX20. Interacts with COX16. Cu cation is required as a cofactor.

The protein localises to the mitochondrion inner membrane. It catalyses the reaction 4 Fe(II)-[cytochrome c] + O2 + 8 H(+)(in) = 4 Fe(III)-[cytochrome c] + 2 H2O + 4 H(+)(out). Functionally, component of the cytochrome c oxidase, the last enzyme in the mitochondrial electron transport chain which drives oxidative phosphorylation. The respiratory chain contains 3 multisubunit complexes succinate dehydrogenase (complex II, CII), ubiquinol-cytochrome c oxidoreductase (cytochrome b-c1 complex, complex III, CIII) and cytochrome c oxidase (complex IV, CIV), that cooperate to transfer electrons derived from NADH and succinate to molecular oxygen, creating an electrochemical gradient over the inner membrane that drives transmembrane transport and the ATP synthase. Cytochrome c oxidase is the component of the respiratory chain that catalyzes the reduction of oxygen to water. Electrons originating from reduced cytochrome c in the intermembrane space (IMS) are transferred via the dinuclear copper A center (CU(A)) of subunit 2 and heme A of subunit 1 to the active site in subunit 1, a binuclear center (BNC) formed by heme A3 and copper B (CU(B)). The BNC reduces molecular oxygen to 2 water molecules using 4 electrons from cytochrome c in the IMS and 4 protons from the mitochondrial matrix. In Squalus acanthias (Spiny dogfish), this protein is Cytochrome c oxidase subunit 2 (MT-CO2).